The primary structure comprises 211 residues: Large ribosomal subunit protein uL4 (211 aa).

Polar residues predominate over residues 46-55 (GNHATKTRSM). The tract at residues 46 to 89 (GNHATKTRSMVSGGGKKPWSQKGTGRARQGSTRAPHWVGGGTVH) is disordered.

The protein belongs to the universal ribosomal protein uL4 family. In terms of assembly, part of the 50S ribosomal subunit.

One of the primary rRNA binding proteins, this protein initially binds near the 5'-end of the 23S rRNA. It is important during the early stages of 50S assembly. It makes multiple contacts with different domains of the 23S rRNA in the assembled 50S subunit and ribosome. Its function is as follows. Forms part of the polypeptide exit tunnel. In Leptospira interrogans serogroup Icterohaemorrhagiae serovar copenhageni (strain Fiocruz L1-130), this protein is Large ribosomal subunit protein uL4.